The chain runs to 294 residues: uncharacterized protein (294 aa).

Belongs to the glycosyltransferase 2 family. WaaE/KdtX subfamily.

This is an uncharacterized protein from Rickettsia bellii (strain RML369-C).